The chain runs to 78 residues: Large ribosomal subunit protein bL28B (78 aa).

It belongs to the bacterial ribosomal protein bL28 family.

In Streptomyces coelicolor (strain ATCC BAA-471 / A3(2) / M145), this protein is Large ribosomal subunit protein bL28B (rpmB2).